The chain runs to 153 residues: Bursicon (153 aa).

Residues 1–22 (MLLYHIVGASVLICLLNETAKA) form the signal peptide. 5 disulfide bridges follow: C29-C78, C43-C92, C53-C113, C57-C115, and C75-C118. Residues 29-119 (CQATPVIHFL…PLECMCRPCT (91 aa)) enclose the CTCK domain.

As to quaternary structure, heterodimer of burs and pburs.

It localises to the secreted. In terms of biological role, final heterodimeric neurohormone released at the end of the molting cycle, involved in the sclerotization (tanning) of the insect cuticle, melanization and wing spreading. The protein is Bursicon of Apis mellifera (Honeybee).